A 235-amino-acid polypeptide reads, in one-letter code: Thiopurine S-methyltransferase (235 aa).

S-adenosyl-L-methionine-binding residues include W13, L48, E69, and R126. Residues 199–235 (PDPQNGAPRRVEHKVYQLTGKRPASPEADGRAAETED) form a disordered region. Residues 226–235 (ADGRAAETED) show a composition bias toward basic and acidic residues.

Belongs to the class I-like SAM-binding methyltransferase superfamily. TPMT family.

The protein resides in the cytoplasm. It carries out the reaction S-adenosyl-L-methionine + a thiopurine = S-adenosyl-L-homocysteine + a thiopurine S-methylether.. This is Thiopurine S-methyltransferase from Stutzerimonas stutzeri (strain A1501) (Pseudomonas stutzeri).